Consider the following 190-residue polypeptide: ATP-dependent Clp protease proteolytic subunit 2 (190 aa).

The active-site Nucleophile is the serine 98. The active site involves histidine 123.

It belongs to the peptidase S14 family. In terms of assembly, fourteen ClpP subunits assemble into 2 heptameric rings which stack back to back to give a disk-like structure with a central cavity, resembling the structure of eukaryotic proteasomes.

The protein localises to the cytoplasm. It catalyses the reaction Hydrolysis of proteins to small peptides in the presence of ATP and magnesium. alpha-casein is the usual test substrate. In the absence of ATP, only oligopeptides shorter than five residues are hydrolyzed (such as succinyl-Leu-Tyr-|-NHMec, and Leu-Tyr-Leu-|-Tyr-Trp, in which cleavage of the -Tyr-|-Leu- and -Tyr-|-Trp bonds also occurs).. Cleaves peptides in various proteins in a process that requires ATP hydrolysis. Has a chymotrypsin-like activity. Plays a major role in the degradation of misfolded proteins. This is ATP-dependent Clp protease proteolytic subunit 2 from Bacillus licheniformis (strain ATCC 14580 / DSM 13 / JCM 2505 / CCUG 7422 / NBRC 12200 / NCIMB 9375 / NCTC 10341 / NRRL NRS-1264 / Gibson 46).